Here is a 416-residue protein sequence, read N- to C-terminus: RNA-editing ligase 2, mitochondrial (416 aa).

The N-terminal 17 residues, 1-17 (MLRRLGVRHFRRTPLLF), are a transit peptide targeting the mitochondrion. Residues 29–31 (TEI), 56–62 (EKVHGAN), arginine 79, glutamate 126, phenylalanine 173, and 269–271 (KFK) contribute to the ATP site. Lysine 57 (N6-AMP-lysine intermediate) is an active-site residue.

This sequence belongs to the RNA ligase 2 family. As to quaternary structure, component of the RNA editing complex, a 1600 kDa complex composed of at least 20 proteins.

The protein localises to the mitochondrion. It catalyses the reaction ATP + (ribonucleotide)n-3'-hydroxyl + 5'-phospho-(ribonucleotide)m = (ribonucleotide)n+m + AMP + diphosphate.. Its function is as follows. RNA editing in kinetoplastid mitochondria inserts and deletes uridylates at multiple sites in pre-mRNAs as directed by guide RNAs. This is RNA-editing ligase 2, mitochondrial (REL2) from Trypanosoma brucei brucei (strain 927/4 GUTat10.1).